A 700-amino-acid chain; its full sequence is Neoverrucotoxin subunit beta (700 aa).

The B30.2/SPRY domain maps to 506 to 700; that stretch reads HMPGVETIKD…QKVNGQIKLL (195 aa).

It belongs to the SNTX/VTX toxin family. As to quaternary structure, heterodimer of alpha and beta subunits. In terms of processing, not glycosylated. Four intrachain disulfide linkages are present in the heterodimer. No interchain disulfide bound links the two subunits. In terms of tissue distribution, expressed by the venom gland.

The protein localises to the secreted. Has hemolytic and lethal activities. Its hemolytic activity is inhibited by anionic lipids, especially potently by cardiolipin. This is Neoverrucotoxin subunit beta from Synanceia verrucosa (Reef stonefish).